The following is a 376-amino-acid chain: Gibberellin 20 oxidase 4 (376 aa).

The region spanning 222–322 (DNESIFRLNY…RKTLAFFLCP (101 aa)) is the Fe2OG dioxygenase domain. His247, Asp249, and His303 together coordinate Fe cation. Arg313 is an active-site residue.

The protein belongs to the iron/ascorbate-dependent oxidoreductase family. GA20OX subfamily. Fe(2+) is required as a cofactor. L-ascorbate serves as cofactor. As to expression, expressed in roots. Detected in leaves, inflorescences and siliques, but not in stems and dry seeds.

The catalysed reaction is gibberellin A12 + 2 2-oxoglutarate + 3 O2 + H(+) = gibberellin A9 + 2 succinate + 3 CO2 + 2 H2O. The enzyme catalyses gibberellin A53 + 2 2-oxoglutarate + 3 O2 + H(+) = gibberellin A20 + 2 succinate + 3 CO2 + 2 H2O. The protein operates within plant hormone biosynthesis; gibberellin biosynthesis. Its function is as follows. Key oxidase enzyme in the biosynthesis of gibberellin that catalyzes the conversion of GA12 and GA53 to GA9 and GA20 respectively, via a three-step oxidation at C-20 of the GA skeleton. In Arabidopsis thaliana (Mouse-ear cress), this protein is Gibberellin 20 oxidase 4 (GA20OX4).